The following is a 216-amino-acid chain: Glutathione S-transferase D5 (216 aa).

Residues Met1–Asp80 form the GST N-terminal domain. Glutathione-binding positions include His50–Ile52 and Glu64–Arg66. Positions Asp86–Phe207 constitute a GST C-terminal domain.

Belongs to the GST superfamily. Delta family. In terms of assembly, homodimer.

The catalysed reaction is RX + glutathione = an S-substituted glutathione + a halide anion + H(+). Its function is as follows. Conjugation of reduced glutathione to a wide number of exogenous and endogenous hydrophobic electrophiles. May be involved in detoxification. This Drosophila melanogaster (Fruit fly) protein is Glutathione S-transferase D5.